A 1220-amino-acid polypeptide reads, in one-letter code: DNA-directed RNA polymerase subunit beta (1220 aa).

The protein belongs to the RNA polymerase beta chain family. As to quaternary structure, the RNAP catalytic core consists of 2 alpha, 1 beta, 1 beta' and 1 omega subunit. When a sigma factor is associated with the core the holoenzyme is formed, which can initiate transcription.

The enzyme catalyses RNA(n) + a ribonucleoside 5'-triphosphate = RNA(n+1) + diphosphate. DNA-dependent RNA polymerase catalyzes the transcription of DNA into RNA using the four ribonucleoside triphosphates as substrates. The chain is DNA-directed RNA polymerase subunit beta from Mesomycoplasma hyopneumoniae (strain 7448) (Mycoplasma hyopneumoniae).